Reading from the N-terminus, the 556-residue chain is Glutamine--tRNA ligase (556 aa).

The short motif at 34–44 (PEPNGFLHIGH) is the 'HIGH' region element. Residues 35–37 (EPN) and 41–47 (HIGHAKA) contribute to the ATP site. L-glutamine contacts are provided by Asp67 and Tyr212. Residues Thr231, 261–262 (RL), and 269–271 (MSK) contribute to the ATP site. A 'KMSKS' region motif is present at residues 268–272 (LMSKR).

This sequence belongs to the class-I aminoacyl-tRNA synthetase family. In terms of assembly, monomer.

The protein resides in the cytoplasm. It carries out the reaction tRNA(Gln) + L-glutamine + ATP = L-glutaminyl-tRNA(Gln) + AMP + diphosphate. This is Glutamine--tRNA ligase from Colwellia psychrerythraea (strain 34H / ATCC BAA-681) (Vibrio psychroerythus).